A 491-amino-acid polypeptide reads, in one-letter code: Proline-rich protein PRCC (491 aa).

Residues methionine 1–glutamate 100 are mediates interaction with MAD2L2. Disordered regions lie at residues methionine 1–alanine 244, isoleucine 260–glutamine 313, and glutamate 432–lysine 454. Positions aspartate 10–alanine 26 are enriched in acidic residues. Over residues alanine 40–alanine 49 the composition is skewed to low complexity. The span at leucine 50–valine 96 shows a compositional bias: pro residues. A phosphoserine mark is found at serine 97, serine 114, serine 157, serine 159, serine 212, and serine 218. The span at glycine 111–leucine 120 shows a compositional bias: low complexity. A compositionally biased stretch (low complexity) spans alanine 230–alanine 244. Threonine 239 is subject to Phosphothreonine. Phosphoserine occurs at positions 241 and 267. A compositionally biased stretch (acidic residues) spans glutamine 262–alanine 272. The span at glycine 287–glutamate 307 shows a compositional bias: pro residues.

As to quaternary structure, interacts with MAD2L2; the interaction is direct. Ubiquitous in fetal and adult tissues.

Its subcellular location is the nucleus. Functionally, may regulate cell cycle progression through interaction with MAD2L2. The chain is Proline-rich protein PRCC (PRCC) from Homo sapiens (Human).